A 241-amino-acid chain; its full sequence is 1-(5-phosphoribosyl)-5-[(5-phosphoribosylamino)methylideneamino] imidazole-4-carboxamide isomerase (241 aa).

The active-site Proton acceptor is the Asp8. The active-site Proton donor is Asp131.

The protein belongs to the HisA/HisF family.

Its subcellular location is the cytoplasm. The catalysed reaction is 1-(5-phospho-beta-D-ribosyl)-5-[(5-phospho-beta-D-ribosylamino)methylideneamino]imidazole-4-carboxamide = 5-[(5-phospho-1-deoxy-D-ribulos-1-ylimino)methylamino]-1-(5-phospho-beta-D-ribosyl)imidazole-4-carboxamide. It participates in amino-acid biosynthesis; L-histidine biosynthesis; L-histidine from 5-phospho-alpha-D-ribose 1-diphosphate: step 4/9. The sequence is that of 1-(5-phosphoribosyl)-5-[(5-phosphoribosylamino)methylideneamino] imidazole-4-carboxamide isomerase from Sorangium cellulosum (strain So ce56) (Polyangium cellulosum (strain So ce56)).